A 296-amino-acid chain; its full sequence is tRNA dimethylallyltransferase (296 aa).

8–15 provides a ligand contact to ATP; it reads GPTGSGKT. 10 to 15 lines the substrate pocket; it reads TGSGKT. Residues 32 to 35 form an interaction with substrate tRNA region; that stretch reads DSRQ.

The protein belongs to the IPP transferase family. As to quaternary structure, monomer. Mg(2+) serves as cofactor.

It carries out the reaction adenosine(37) in tRNA + dimethylallyl diphosphate = N(6)-dimethylallyladenosine(37) in tRNA + diphosphate. In terms of biological role, catalyzes the transfer of a dimethylallyl group onto the adenine at position 37 in tRNAs that read codons beginning with uridine, leading to the formation of N6-(dimethylallyl)adenosine (i(6)A). The chain is tRNA dimethylallyltransferase from Leptospira biflexa serovar Patoc (strain Patoc 1 / Ames).